Reading from the N-terminus, the 334-residue chain is Formylmethanofuran--tetrahydromethanopterin formyltransferase (334 aa).

Belongs to the FTR family. Homotetramer.

It is found in the cytoplasm. The catalysed reaction is N-formylmethanofuran + 5,6,7,8-tetrahydromethanopterin + H(+) = N(5)-formyl-5,6,7,8-tetrahydromethanopterin + methanofuran. It participates in one-carbon metabolism; formaldehyde degradation; formate from formaldehyde (H(4)MPT route): step 4/5. In terms of biological role, catalyzes the transfer of a formyl group from 5-formyl tetrahydromethanopterin (5-formyl-H(4)MPT) to methanofuran (MFR) to produce formylmethanofuran (formyl-MFR) and tetrahydromethanopterin (H(4)MPT). The polypeptide is Formylmethanofuran--tetrahydromethanopterin formyltransferase (Rhodopirellula baltica (strain DSM 10527 / NCIMB 13988 / SH1)).